We begin with the raw amino-acid sequence, 404 residues long: S-adenosylmethionine synthase (404 aa).

Polar residues predominate over residues 1–13; that stretch reads MSQSRYFFTSESV. Positions 1-21 are disordered; it reads MSQSRYFFTSESVSEGHPDKV. His-17 provides a ligand contact to ATP. Residue Asp-19 coordinates Mg(2+). Position 45 (Glu-45) interacts with K(+). 2 residues coordinate L-methionine: Glu-58 and Gln-101. Residues 101–111 are flexible loop; that stretch reads QSPDINRGVDR. ATP-binding positions include 172–174, 245–246, Asp-254, 260–261, Ala-277, and Lys-281; these read DAK, RF, and RK. Position 254 (Asp-254) interacts with L-methionine. Position 285 (Lys-285) interacts with L-methionine.

This sequence belongs to the AdoMet synthase family. In terms of assembly, homotetramer; dimer of dimers. Requires Mg(2+) as cofactor. K(+) serves as cofactor.

The protein resides in the cytoplasm. It carries out the reaction L-methionine + ATP + H2O = S-adenosyl-L-methionine + phosphate + diphosphate. It participates in amino-acid biosynthesis; S-adenosyl-L-methionine biosynthesis; S-adenosyl-L-methionine from L-methionine: step 1/1. Functionally, catalyzes the formation of S-adenosylmethionine (AdoMet) from methionine and ATP. The overall synthetic reaction is composed of two sequential steps, AdoMet formation and the subsequent tripolyphosphate hydrolysis which occurs prior to release of AdoMet from the enzyme. In Chlorobium phaeobacteroides (strain DSM 266 / SMG 266 / 2430), this protein is S-adenosylmethionine synthase.